Here is a 926-residue protein sequence, read N- to C-terminus: Neurofilament medium polypeptide (926 aa).

A compositionally biased stretch (polar residues) spans 1–10 (MSYTLDSLGN). Disordered stretches follow at residues 1-51 (MSYT…VSSS) and 79-102 (QSSS…SNEK). The residue at position 2 (S2) is an N-acetylserine. The segment at 2–104 (SYTLDSLGNP…KLSRSNEKEQ (103 aa)) is head. Low complexity predominate over residues 21 to 44 (RSSFSRISGSPSSGFRSQSWSRGS). Phosphoserine is present on S30. At R42 the chain carries Omega-N-methylarginine. A glycan (O-linked (GlcNAc) threonine) is linked at T47. Position 99 is a phosphoserine (S99). The IF rod domain occupies 101 to 412 (EKEQIQGLND…KLLEGEETRF (312 aa)). The interval 105 to 136 (IQGLNDRFAGYIEKVHYLEQQNKEIEAEIQAL) is coil 1A. Positions 137 to 149 (RQKQASHAQLGDA) are linker 1. The coil 1B stretch occupies residues 150-248 (YDQEIRELRA…EEEVADLLAQ (99 aa)). Position 226 is a phosphoserine (S226). The tract at residues 249–265 (IQASHITVERKDYLKTD) is linker 12. The coil 2A stretch occupies residues 266-287 (ISTALKEIRSQLESHSDQNMHQ). A linker 2 region spans residues 288–291 (AEEW). The coil 2B stretch occupies residues 292–412 (FKCRYAKLTE…KLLEGEETRF (121 aa)). Residue Y320 is modified to Phosphotyrosine. Phosphoserine is present on residues S346, S418, S430, S468, and S484. The tract at residues 413 to 926 (STFAGSITGP…AIVKEVTQSD (514 aa)) is tail. Residues 487–860 (EEVKEEEAEE…EKKGGDKSEE (374 aa)) are disordered. The segment covering 490 to 507 (KEEEAEEKEEKEEAEEEV) has biased composition (acidic residues). The stretch at 512–516 (KSPVK) is repeat 1. Positions 512-698 (KSPVKATAPE…KSPAPKSPVE (187 aa)) are 17 X 5 AA approximate tandem repeats of K-S-P-[TVEA]-[AKETP]. At S513 the chain carries Phosphoserine. Residues 523–543 (KEEEGEKEEEEGQEEEEEEEE) are compositionally biased toward acidic residues. The segment covering 544–563 (AAKSDQAEEGGSEKEGSSEK) has biased composition (basic and acidic residues). Phosphoserine is present on residues S547, S555, S560, and S561. Over residues 564-584 (EEGEQEEEGETEAEGEGEEAA) the composition is skewed to acidic residues. T574 is subject to Phosphothreonine. The segment covering 585-619 (AEAKEEKKMEEKAEEVAPKEELAAEAKVEKPEKAK) has biased composition (basic and acidic residues). Tandem repeats lie at residues 619 to 623 (KSPVA), 624 to 628 (KSPTT), 629 to 633 (KSPTA), 634 to 638 (KSPEA), 639 to 643 (KSPEA), 644 to 648 (KSPTA), 649 to 653 (KSPTA), 654 to 658 (KSPVA), 659 to 663 (KSPTA), 664 to 668 (KSPEA), 669 to 673 (KSPEA), 674 to 678 (KSPTA), 679 to 683 (KSPTA), 684 to 688 (KSPAA), 689 to 693 (KSPAP), and 694 to 698 (KSPVE). Residue T628 is modified to Phosphothreonine. A phosphoserine mark is found at S630, S635, and S640. Position 647 is a phosphothreonine (T647). Phosphoserine is present on residues S650 and S655. S665 and S670 each carry phosphoserine. Low complexity predominate over residues 673–692 (AKSPTAKSPTAKSPAAKSPA). T677 carries the phosphothreonine modification. Residues S680, S685, S690, S695, S727, S751, S757, S771, S831, and S847 each carry the phosphoserine modification. 3 stretches are compositionally biased toward basic and acidic residues: residues 696–764 (PVEE…EEVP), 771–811 (SPEK…KEDI), and 826–838 (TKEK…EEKG). Residues 849–860 (GDEKKGGDKSEE) show a composition bias toward basic and acidic residues.

As to quaternary structure, forms heterodimers with NEFL; which can further hetero-oligomerize (in vitro). Forms heterodimers with INA (in vitro). In terms of processing, phosphorylated on a number of serine residues in the repeated K-S-P tripeptide motif. Phosphorylation of NFH may result in the formation of interfilament cross-links that are important in the maintenance of axonal caliber. Phosphorylation seems to play a major role in the functioning of the larger neurofilament polypeptides (NF-M and NF-H), the levels of phosphorylation being altered developmentally and coincidentally with a change in the neurofilament function. Post-translationally, phosphorylated in the head and rod regions by the PKC kinase PKN1, leading to the inhibition of polymerization.

It is found in the cytoplasm. The protein resides in the cytoskeleton. It localises to the cell projection. Its subcellular location is the axon. Neurofilaments usually contain three intermediate filament proteins: NEFL, NEFM, and NEFH which are involved in the maintenance of neuronal caliber. May additionally cooperate with the neuronal intermediate filament proteins PRPH and INA to form neuronal filamentous networks. The polypeptide is Neurofilament medium polypeptide (NEFM) (Bos taurus (Bovine)).